Here is a 780-residue protein sequence, read N- to C-terminus: ATPase family gene 2 protein (780 aa).

Residues Met1–Ala23 are compositionally biased toward low complexity. Residues Met1–Ser26 are disordered. ATP contacts are provided by residues Gly286–Thr293 and Gly557–Thr564.

It belongs to the AAA ATPase family. AFG2 subfamily. Homohexamer; ATP binding induces oligomerization. Forms a ring-shaped particle of about 12 nm diameter, that displays 6-fold radial symmetry. Associates with cytoplasmic pre-60S ribosomal particles containing ARX1, ALB1, RLP24 and NOG1. Binds to pre-60S ribosomal particles soon after their export from the nucleus and is released before REI1 and LSG1 are incorporated into the particles. Hexameric form interacts with RLP24 (via C-terminal); the interaction recruits AFG2 to pre-60S ribosomal particles and promotes AFG2 ATPase activity and RLP24 release from pre-60S ribosomal particles. Interacts (via N-terminus) with nucleoporin NUP116 (via N-terminus); the interaction is required for RLP24 release from pre-60S ribosomal particles.

The protein localises to the cytoplasm. It carries out the reaction ATP + H2O = ADP + phosphate + H(+). Its activity is regulated as follows. The hexamer is activated by RLP24 during pre-60S ribosomal particle maturation; RLP24 activates ATPase activity of both ATP-binding regions and increases cooperativity between AFG2 subunits. The second ATP-binding region is inhibited by diazaborine; the inhibition requires prior ATP binding specifically to the second ATP-binding region. Its function is as follows. ATP-dependent chaperone which uses the energy provided by ATP hydrolysis to generate mechanical force to disassemble protein complexes. Plays an essential role in the cytoplasmic maturation steps of pre-60S ribosomal particles by promoting the release of shuttling protein RLP24 from the pre-ribosomal particles. This step facilitates the subsequent release of other shuttling proteins such as NOG1 and allows the transition of the pre-ribosomal particles to later maturation forms that bind REI1. Essential for viability. This is ATPase family gene 2 protein from Saccharomyces cerevisiae (strain ATCC 204508 / S288c) (Baker's yeast).